Here is a 351-residue protein sequence, read N- to C-terminus: MANFFSLGGNQEQQHQEISSSQALVPTESNNWFLYRNEHHHHHHNQEIPNTYKGFELWQSGNTPQHQHQHHQQQQQFRHPIYPLQDLYSTDVGLGVGPSRSGFDISAGDHEASRSGFVMMRSGGGGISCQDCGNQAKKDCQHMRCRTCCKSRGFQCQTHVKSTWVPAAKRRERQQQLAALQQQQQGHNNNNNNHKNKRQREDPSASSLVSTRLPSNTNGLEVGKFPSKVRTSAVFQCIQMSSIEDDEDQLAYQAAVSIGGHVFKGILYDQGHESQYNNMVAAGGDTSSGGSAGGVQHHHHNSAAVATATTTSGGDATAAGPSNFLDPSLFPAPLSTFMVAGTQFFPPSRSP.

Residues 1–23 form a disordered region; that stretch reads MANFFSLGGNQEQQHQEISSSQA. A compositionally biased stretch (low complexity) spans 11–22; it reads QEQQHQEISSSQ. Zn(2+)-binding residues include Cys-129, Cys-132, Cys-140, Cys-145, Cys-149, and Cys-156. Positions 129–156 form a DNA-binding region, zn(2)-C6 fungal-type; degenerate; that stretch reads CQDCGNQAKKDCQHMRCRTCCKSRGFQC. The interval 170-219 is disordered; it reads RRERQQQLAALQQQQQGHNNNNNNHKNKRQREDPSASSLVSTRLPSNTNG. Residues 175 to 193 show a composition bias toward low complexity; the sequence is QQLAALQQQQQGHNNNNNN. Residues 204 to 219 are compositionally biased toward polar residues; sequence SASSLVSTRLPSNTNG. Positions 258–261 match the Required for homo- and heterodimerization motif; it reads IGGH. Positions 286-320 are disordered; the sequence is TSSGGSAGGVQHHHHNSAAVATATTTSGGDATAAG. Low complexity predominate over residues 303–320; that stretch reads AAVATATTTSGGDATAAG.

This sequence belongs to the SHI protein family. Forms homodimers and heterodimers with LRP1.

The protein localises to the nucleus. Functionally, transcription activator involved in the transcriptional regulation of terpene biosynthesis in glandular trichomes. Binds to the promoter of the linalool synthase TPS5 and promotes TPS5 gene transactivation. Acts synergistically with MYC1 in the transactivation of TPS5. This Solanum lycopersicum (Tomato) protein is Protein EXPRESSION OF TERPENOIDS 1.